Consider the following 312-residue polypeptide: Dehydrin CAS31 (312 aa).

2 disordered regions span residues 1–88 and 248–287; these read MSQY…HTGG and GTEQ…HHGE. The span at 21–30 shows a compositional bias: polar residues; the sequence is PLTSQGQVDQ. Residues 35 to 46 are compositionally biased toward gly residues; sequence ISGGGMTGATGH. Positions 55-66 are enriched in low complexity; the sequence is HGVGVDQTTGFG. Gly residues-rich tracts occupy residues 67–88 and 256–278; these read SNTG…HTGG and TGTG…GTTG.

It belongs to the plant dehydrin family. In terms of assembly, interacts with the leghemoglobin LB120-1 in the cytoplasm; this interaction leads to LB120-1 protection from denaturation under thermal and drought stresses. Expressed in nodules and roots.

It is found in the cytoplasm. Intrinsically disordered protein acting as a chaperone. Ensures leghemoglobins (e.g. LB120-1) protection from denaturation under thermal and drought stresses to delay root nodule nitrogenase inactivation and subsequent nodule senescence, thus supporting symbiotic nitrogen fixation (SNF). The sequence is that of Dehydrin CAS31 from Medicago truncatula (Barrel medic).